A 100-amino-acid polypeptide reads, in one-letter code: Ferredoxin (100 aa).

Residues methionine 1–phenylalanine 8 constitute a propeptide that is removed on maturation. The 92-residue stretch at glycine 9–leucine 100 folds into the 2Fe-2S ferredoxin-type domain. [2Fe-2S] cluster contacts are provided by cysteine 46, cysteine 52, cysteine 55, and cysteine 85.

[2Fe-2S] cluster is required as a cofactor.

It is found in the hydrogenosome. Functionally, ferredoxins are iron-sulfur proteins that transfer electrons in a wide variety of metabolic reactions. It links pyruvate:ferredoxin oxidoreductase to hydrogenase. This Trichomonas vaginalis protein is Ferredoxin.